The following is a 133-amino-acid chain: Holo-[acyl-carrier-protein] synthase (133 aa).

Mg(2+) is bound by residues D8 and E58.

This sequence belongs to the P-Pant transferase superfamily. AcpS family. The cofactor is Mg(2+).

Its subcellular location is the cytoplasm. The catalysed reaction is apo-[ACP] + CoA = holo-[ACP] + adenosine 3',5'-bisphosphate + H(+). In terms of biological role, transfers the 4'-phosphopantetheine moiety from coenzyme A to a Ser of acyl-carrier-protein. The chain is Holo-[acyl-carrier-protein] synthase from Erythrobacter litoralis (strain HTCC2594).